A 464-amino-acid chain; its full sequence is Argininosuccinate lyase (464 aa).

This sequence belongs to the lyase 1 family. Argininosuccinate lyase subfamily.

The protein localises to the cytoplasm. It catalyses the reaction 2-(N(omega)-L-arginino)succinate = fumarate + L-arginine. It functions in the pathway amino-acid biosynthesis; L-arginine biosynthesis; L-arginine from L-ornithine and carbamoyl phosphate: step 3/3. This is Argininosuccinate lyase from Moorella thermoacetica (strain ATCC 39073 / JCM 9320).